The following is a 248-amino-acid chain: Anamorsin homolog (248 aa).

The interval 4 to 130 is N-terminal SAM-like domain; that stretch reads FKGLQKSLYI…ETGSSARLSF (127 aa). Residues 131 to 161 are linker; the sequence is AKKTSSVNVWKISGDDEELIDEEELLDEEDK. The [2Fe-2S] cluster site is built by Cys-172, Cys-181, Cys-184, and Cys-186. The fe-S binding site A stretch occupies residues 172-186; sequence CSTTGKRKACKNCSC. Residues Cys-209, Cys-212, Cys-220, and Cys-223 each coordinate [4Fe-4S] cluster. 2 short sequence motifs (cx2C motif) span residues 209 to 212 and 220 to 223; these read CGNC and CSTC. Positions 209-223 are fe-S binding site B; that stretch reads CGNCYLGDAFRCSTC.

It belongs to the anamorsin family. In terms of assembly, monomer. The cofactor is [2Fe-2S] cluster. It depends on [4Fe-4S] cluster as a cofactor.

It localises to the cytoplasm. Its subcellular location is the mitochondrion intermembrane space. In terms of biological role, component of the cytosolic iron-sulfur (Fe-S) protein assembly (CIA) machinery. Required for the maturation of extramitochondrial Fe-S proteins. Part of an electron transfer chain functioning in an early step of cytosolic Fe-S biogenesis, facilitating the de novo assembly of a [4Fe-4S] cluster on the cytosolic Fe-S scaffold complex. Electrons are transferred from NADPH via a FAD- and FMN-containing diflavin oxidoreductase. Together with the diflavin oxidoreductase, also required for the assembly of the diferric tyrosyl radical cofactor of ribonucleotide reductase (RNR), probably by providing electrons for reduction during radical cofactor maturation in the catalytic small subunit. This is Anamorsin homolog from Drosophila virilis (Fruit fly).